Here is a 483-residue protein sequence, read N- to C-terminus: Regulatory protein ViaA (483 aa).

It belongs to the ViaA family. As to quaternary structure, homodimer. Interacts with RavA.

It localises to the cytoplasm. Its function is as follows. Component of the RavA-ViaA chaperone complex, which may act on the membrane to optimize the function of some of the respiratory chains. ViaA stimulates the ATPase activity of RavA. This is Regulatory protein ViaA from Shigella dysenteriae serotype 1 (strain Sd197).